Here is a 509-residue protein sequence, read N- to C-terminus: Cytochrome P450 monooxygenase hepC (509 aa).

Residues 5-25 (MIIPSFWTGTAIIGLVACAYV) traverse the membrane as a helical segment. Cys454 is a binding site for heme. N-linked (GlcNAc...) asparagine glycosylation occurs at Asn491.

The protein belongs to the cytochrome P450 family. The cofactor is heme.

The protein localises to the membrane. The protein operates within secondary metabolite biosynthesis. Functionally, cytochrome P450 monooxygenase; part of the gene cluster that mediates the biosynthesis of heptelidic acid (HA), a sesquiterpene lactone that acts as an inhibitor of glyceraldehyde-3-phosphatedehydrogenase (GAPDH) and a growth inhibitor of the salt-tolerant lactic acid bacteria in soy sauce brewing. This chain is Cytochrome P450 monooxygenase hepC, found in Aspergillus oryzae (strain ATCC 42149 / RIB 40) (Yellow koji mold).